Consider the following 155-residue polypeptide: Interferon gamma (155 aa).

The signal sequence occupies residues 1 to 22 (MNATHCILALQLFLMAVSGCYC). N-linked (GlcNAc...) asparagine glycans are attached at residues Asn-38 and Asn-90.

Belongs to the type II (or gamma) interferon family. Homodimer. Interacts with IFNGR1 (via extracellular domain); this interaction promotes IFNGR1 dimerization. In terms of tissue distribution, released primarily from activated T lymphocytes.

Its subcellular location is the secreted. Type II interferon produced by immune cells such as T-cells and NK cells that plays crucial roles in antimicrobial, antiviral, and antitumor responses by activating effector immune cells and enhancing antigen presentation. Primarily signals through the JAK-STAT pathway after interaction with its receptor IFNGR1 to affect gene regulation. Upon IFNG binding, IFNGR1 intracellular domain opens out to allow association of downstream signaling components JAK2, JAK1 and STAT1, leading to STAT1 activation, nuclear translocation and transcription of IFNG-regulated genes. Many of the induced genes are transcription factors such as IRF1 that are able to further drive regulation of a next wave of transcription. Plays a role in class I antigen presentation pathway by inducing a replacement of catalytic proteasome subunits with immunoproteasome subunits. In turn, increases the quantity, quality, and repertoire of peptides for class I MHC loading. Increases the efficiency of peptide generation also by inducing the expression of activator PA28 that associates with the proteasome and alters its proteolytic cleavage preference. Up-regulates as well MHC II complexes on the cell surface by promoting expression of several key molecules such as cathepsins B/CTSB, H/CTSH, and L/CTSL. Participates in the regulation of hematopoietic stem cells during development and under homeostatic conditions by affecting their development, quiescence, and differentiation. This chain is Interferon gamma (Ifng), found in Mus musculus (Mouse).